The chain runs to 193 residues: Ubiquitin-conjugating enzyme E2 E1 (193 aa).

Positions 1–45 (MSDDDSRASTSSSSSSSSNQQTEKEGSTPKKKESKVSMSKNSKLL) are disordered. Ser2 bears the N-acetylserine mark. Over residues 8–18 (ASTSSSSSSSS) the composition is skewed to low complexity. Basic and acidic residues predominate over residues 22–35 (TEKEGSTPKKKESK). A compositionally biased stretch (polar residues) spans 36–45 (VSMSKNSKLL). The UBC core domain maps to 47 to 193 (TSAKRIQKEL…ARQWTKRYAT (147 aa)). Cys131 acts as the Glycyl thioester intermediate in catalysis. A Glycyl lysine isopeptide (Lys-Gly) (interchain with G-Cter in ISG15) cross-link involves residue Lys136.

This sequence belongs to the ubiquitin-conjugating enzyme family. Interacts with RNF14. Post-translationally, ISGylation suppresses ubiquitin E2 enzyme activity. Autoubiquitinated.

The protein localises to the nucleus. The enzyme catalyses S-ubiquitinyl-[E1 ubiquitin-activating enzyme]-L-cysteine + [E2 ubiquitin-conjugating enzyme]-L-cysteine = [E1 ubiquitin-activating enzyme]-L-cysteine + S-ubiquitinyl-[E2 ubiquitin-conjugating enzyme]-L-cysteine.. The catalysed reaction is S-ubiquitinyl-[E1 ubiquitin-activating enzyme]-L-cysteine + [acceptor protein]-L-lysine = [E1 ubiquitin-activating enzyme]-L-cysteine + N(6)-monoubiquitinyl-[acceptor protein]-L-lysine.. It functions in the pathway protein modification; protein ubiquitination. In terms of biological role, accepts ubiquitin from the E1 complex and catalyzes its covalent attachment to other proteins. Catalyzes the covalent attachment of ISG15 to other proteins. Mediates the selective degradation of short-lived and abnormal proteins. In vitro also catalyzes 'Lys-48'-linked polyubiquitination. The sequence is that of Ubiquitin-conjugating enzyme E2 E1 (Ube2e1) from Mus musculus (Mouse).